A 499-amino-acid polypeptide reads, in one-letter code: Putative protease Do-like 12, mitochondrial (499 aa).

A mitochondrion-targeting transit peptide spans 1–24; sequence MLFRSCVGMVSRYSRALLPTITIS. Positions 94-259 are serine protease; that stretch reads GGSGFAIAGK…IPTPIIRHFI (166 aa). Active-site charge relay system residues include histidine 110, aspartate 144, and serine 222. Residues 272 to 356 enclose the PDZ domain; it reads GSLVLSCQSM…DENILVKVLR (85 aa).

Belongs to the peptidase S1C family.

The protein resides in the mitochondrion matrix. Putative serine protease. In Arabidopsis thaliana (Mouse-ear cress), this protein is Putative protease Do-like 12, mitochondrial (DEGP12).